Reading from the N-terminus, the 499-residue chain is Bifunctional purine biosynthesis protein PurH (499 aa).

Residues 1-144 (MINRALISVY…KNFKDVIVVT (144 aa)) enclose the MGS-like domain.

The protein belongs to the PurH family.

The enzyme catalyses (6R)-10-formyltetrahydrofolate + 5-amino-1-(5-phospho-beta-D-ribosyl)imidazole-4-carboxamide = 5-formamido-1-(5-phospho-D-ribosyl)imidazole-4-carboxamide + (6S)-5,6,7,8-tetrahydrofolate. The catalysed reaction is IMP + H2O = 5-formamido-1-(5-phospho-D-ribosyl)imidazole-4-carboxamide. The protein operates within purine metabolism; IMP biosynthesis via de novo pathway; 5-formamido-1-(5-phospho-D-ribosyl)imidazole-4-carboxamide from 5-amino-1-(5-phospho-D-ribosyl)imidazole-4-carboxamide (10-formyl THF route): step 1/1. It functions in the pathway purine metabolism; IMP biosynthesis via de novo pathway; IMP from 5-formamido-1-(5-phospho-D-ribosyl)imidazole-4-carboxamide: step 1/1. In Clostridium kluyveri (strain NBRC 12016), this protein is Bifunctional purine biosynthesis protein PurH.